We begin with the raw amino-acid sequence, 228 residues long: Serum amyloid P-component (228 aa).

The first 20 residues, 1 to 20, serve as a signal peptide directing secretion; that stretch reads MDKLLLWMSVFTSLLSEAFA. Residues 25–224 enclose the Pentraxin (PTX) domain; that stretch reads NQKVFVFPRE…YVVIKPRMWD (200 aa). The N-linked (GlcNAc...) asparagine glycan is linked to Asn-52. Cysteines 56 and 115 form a disulfide. Ca(2+) is bound by residues Asp-78, Asn-79, Glu-156, Gln-157, Asp-158, and Gln-168.

The protein belongs to the pentraxin family. In terms of assembly, homopentamer. Pentraxin (or pentaxin) have a discoid arrangement of 5 non-covalently bound subunits. Requires Ca(2+) as cofactor.

Its subcellular location is the secreted. The polypeptide is Serum amyloid P-component (Apcs) (Rattus norvegicus (Rat)).